The primary structure comprises 885 residues: Translation initiation factor IF-2 (885 aa).

Disordered stretches follow at residues lysine 135 to glutamate 159 and glutamine 184 to methionine 289. Over residues glutamine 184 to isoleucine 232 the composition is skewed to basic and acidic residues. The span at glycine 253–arginine 266 shows a compositional bias: basic residues. Basic and acidic residues predominate over residues glycine 267–glutamate 276. A tr-type G domain is found at proline 385–lysine 554. The segment at glycine 394 to threonine 401 is G1. A GTP-binding site is contributed by glycine 394 to threonine 401. The tract at residues glycine 419–histidine 423 is G2. A G3 region spans residues aspartate 440–glycine 443. Residues aspartate 440–histidine 444 and asparagine 494–aspartate 497 contribute to the GTP site. The G4 stretch occupies residues asparagine 494–aspartate 497. The G5 stretch occupies residues serine 530–lysine 532.

Belongs to the TRAFAC class translation factor GTPase superfamily. Classic translation factor GTPase family. IF-2 subfamily.

The protein localises to the cytoplasm. Its function is as follows. One of the essential components for the initiation of protein synthesis. Protects formylmethionyl-tRNA from spontaneous hydrolysis and promotes its binding to the 30S ribosomal subunits. Also involved in the hydrolysis of GTP during the formation of the 70S ribosomal complex. The chain is Translation initiation factor IF-2 from Shewanella sp. (strain MR-7).